Here is a 299-residue protein sequence, read N- to C-terminus: Mitochondrial 2-oxodicarboxylate carrier (299 aa).

3 Solcar repeats span residues 11–100, 107–196, and 205–294; these read NEAS…YKKL, SPAL…VKNI, and LEFL…TYSW. The next 6 helical transmembrane spans lie at 17-37, 62-82, 100-120, 179-199, 211-231, and 274-290; these read ILAGGSAGLVEICLMHPLDVV, MIFRTEGLFGFYKGILPPILA, LLGYVSLSPALTFAVAGLGSG, HGVFNMVYFGFYFNVKNIIPV, FGIGLLSGTIASVINIPFDVA, and IMRLGPGGAVMLLVYEY.

This sequence belongs to the mitochondrial carrier (TC 2.A.29) family.

It is found in the mitochondrion inner membrane. The catalysed reaction is 2-oxoadipate(in) + 2-oxoglutarate(out) = 2-oxoadipate(out) + 2-oxoglutarate(in). It carries out the reaction hexanedioate(in) + 2-oxoglutarate(out) = hexanedioate(out) + 2-oxoglutarate(in). The enzyme catalyses L-2-aminoadipate(in) + 2-oxoglutarate(out) = L-2-aminoadipate(out) + 2-oxoglutarate(in). It catalyses the reaction glutarate(in) + 2-oxoglutarate(out) = glutarate(out) + 2-oxoglutarate(in). The catalysed reaction is 2-oxoheptanedioate(in) + 2-oxoglutarate(out) = 2-oxoheptanedioate(out) + 2-oxoglutarate(in). It carries out the reaction heptanedioate(in) + 2-oxoglutarate(out) = heptanedioate(out) + 2-oxoglutarate(in). The enzyme catalyses citrate(in) + 2-oxoglutarate(out) = citrate(out) + 2-oxoglutarate(in). In terms of biological role, transports dicarboxylates across the inner membranes of mitochondria by a counter-exchange mechanism. Can transport 2-oxoadipate (2-oxohexanedioate), 2-oxoglutarate, adipate (hexanedioate), glutarate, and to a lesser extent, pimelate (heptanedioate), 2-oxopimelate (2-oxoheptanedioate), 2-aminoadipate (2-aminohexanedioate), oxaloacetate, and citrate. Plays a central role in catabolism of lysine, hydroxylysine, and tryptophan, by transporting common metabolite intermediates (such as 2-oxoadipate) into the mitochondria, where it is converted into acetyl-CoA and can enter the citric acid (TCA) cycle. This is Mitochondrial 2-oxodicarboxylate carrier (SLC25A21) from Bos taurus (Bovine).